We begin with the raw amino-acid sequence, 159 residues long: Na(+)/H(+) antiporter subunit E1 (159 aa).

4 helical membrane-spanning segments follow: residues 1 to 21 (MAIQ…LSGS), 27 to 47 (LLLG…ILPG), 49 to 69 (FYFI…VELL), and 101 to 121 (WQIV…VLGI).

Belongs to the CPA3 antiporters (TC 2.A.63) subunit E family. As to quaternary structure, may form a heterooligomeric complex that consists of seven subunits: mnhA1, mnhB1, mnhC1, mnhD1, mnhE1, mnhF1 and mnhG1.

Its subcellular location is the cell membrane. Mnh complex is a Na(+)/H(+) antiporter involved in Na(+) excretion. The sequence is that of Na(+)/H(+) antiporter subunit E1 (mnhE1) from Staphylococcus haemolyticus (strain JCSC1435).